A 297-amino-acid chain; its full sequence is Flavin-dependent thymidylate synthase (297 aa).

Residues 41-251 form the ThyX domain; the sequence is GFVRLVDYMG…PLTYAAFVEY (211 aa). Residues Thr87, 110–112, and Glu118 contribute to the FAD site; that span reads RHR. DUMP is bound by residues 107 to 110, 118 to 122, and Arg190; these read QWVR and EYSAR. Positions 110–120 match the ThyX motif motif; that stretch reads RHRTANVNEYS. FAD contacts are provided by residues 206-208 and His212; that span reads DLH. Arg217 lines the dUMP pocket. Arg217 acts as the Involved in ionization of N3 of dUMP, leading to its activation in catalysis.

The protein belongs to the thymidylate synthase ThyX family. In terms of assembly, homotetramer. FAD is required as a cofactor.

The enzyme catalyses dUMP + (6R)-5,10-methylene-5,6,7,8-tetrahydrofolate + NADPH + H(+) = dTMP + (6S)-5,6,7,8-tetrahydrofolate + NADP(+). The protein operates within pyrimidine metabolism; dTTP biosynthesis. Its function is as follows. Catalyzes the reductive methylation of 2'-deoxyuridine-5'-monophosphate (dUMP) to 2'-deoxythymidine-5'-monophosphate (dTMP) while utilizing 5,10-methylenetetrahydrofolate (mTHF) as the methyl donor, and NADPH and FADH(2) as the reductant. This chain is Flavin-dependent thymidylate synthase, found in Ehrlichia ruminantium (strain Gardel).